Consider the following 854-residue polypeptide: Envelope glycoprotein B (854 aa).

The signal sequence occupies residues 1–30 (MSKNWFPLLCASVLVVYVSIASSSTGTASG). The Virion surface portion of the chain corresponds to 31–723 (AVTPTSPTEN…EGVVGFIKNP (693 aa)). 3 N-linked (GlcNAc...) asparagine; by host glycosylation sites follow: asparagine 40, asparagine 48, and asparagine 60. 5 disulfides stabilise this stretch: cysteine 69-cysteine 524, cysteine 86-cysteine 480, cysteine 160-cysteine 225, cysteine 317-cysteine 364, and cysteine 546-cysteine 583. The interval 127 to 133 (SYSFIRE) is involved in fusion and/or binding to host membrane. The N-linked (GlcNAc...) asparagine; by host glycan is linked to asparagine 183. Positions 212–219 (GSTWLYTT) are involved in fusion and/or binding to host membrane. Asparagine 256, asparagine 275, asparagine 314, asparagine 356, asparagine 378, asparagine 382, asparagine 390, asparagine 423, asparagine 426, asparagine 442, asparagine 558, and asparagine 595 each carry an N-linked (GlcNAc...) asparagine; by host glycan. Hydrophobic membrane proximal region stretches follow at residues 669–721 (VEGK…GFIK) and 700–720 (VAIGAVGGAVASFVEGVVGFI). The chain crosses the membrane as a helical span at residues 724–744 (FGSFTVILFLLAVLGVIYLIY). Residues 745–854 (MRQKRAYEKP…YQKIQNEYEV (110 aa)) are Intravirion-facing.

This sequence belongs to the herpesviridae glycoprotein B family. As to quaternary structure, homotrimer; disulfide-linked. Binds to heparan sulfate proteoglycans. Interacts with gH/gL heterodimer. A proteolytic cleavage by host furin generates two subunits that remain linked by disulfide bonds.

It localises to the virion membrane. The protein localises to the host cell membrane. Its subcellular location is the host endosome membrane. It is found in the host Golgi apparatus membrane. Functionally, envelope glycoprotein that forms spikes at the surface of virion envelope. Essential for the initial attachment to heparan sulfate moieties of the host cell surface proteoglycans. Involved in fusion of viral and cellular membranes leading to virus entry into the host cell. Following initial binding to its host receptors, membrane fusion is mediated by the fusion machinery composed at least of gB and the heterodimer gH/gL. May be involved in the fusion between the virion envelope and the outer nuclear membrane during virion egress. The chain is Envelope glycoprotein B from Macaca mulatta (Rhesus macaque).